Consider the following 266-residue polypeptide: GTP-binding protein Rhes (266 aa).

Residue 26–33 coordinates GTP; that stretch reads GASRVGKS. Positions 48-56 match the Effector region motif; the sequence is YTPTIEDFH. GTP is bound by residues 73-77 and 140-143; these read DTSGN and NKND. The tract at residues 189–235 is interaction with GNB1, GNB2 and GNB3; it reads MAKLPHEMSPALHHKISVQYGDAFHPRPFCMRRTKVAGAYGMVSPFA. Cys-263 is modified (cysteine methyl ester). Cys-263 is lipidated: S-farnesyl cysteine. Residues 264-266 constitute a propeptide, removed in mature form; the sequence is SIQ.

Belongs to the small GTPase superfamily. RasD family. Monomer (Potential). Interacts with PIK3CA and UBE2I. Interacts with GNB1, GNB2 and GNB3. In terms of processing, farnesylated. Farnesylation is required for membrane targeting. Highly expressed in brain; prominently in the striatum and weakly in kidney, thyroid, lung, heart and testis. Not expressed in liver. Expressed in pancreatic cell lines and in a embryonic stem cell line.

The protein resides in the cell membrane. In terms of biological role, GTPase signaling protein that binds to and hydrolyzes GTP. Regulates signaling pathways involving G-proteins-coupled receptor and heterotrimeric proteins such as GNB1, GNB2 and GNB3. May be involved in selected striatal competencies, mainly locomotor activity and motor coordination. This Mus musculus (Mouse) protein is GTP-binding protein Rhes (Rasd2).